We begin with the raw amino-acid sequence, 121 residues long: Large ribosomal subunit protein bL12 (121 aa).

The protein belongs to the bacterial ribosomal protein bL12 family. Homodimer. Part of the ribosomal stalk of the 50S ribosomal subunit. Forms a multimeric L10(L12)X complex, where L10 forms an elongated spine to which 2 to 4 L12 dimers bind in a sequential fashion. Binds GTP-bound translation factors.

Forms part of the ribosomal stalk which helps the ribosome interact with GTP-bound translation factors. Is thus essential for accurate translation. This Malacoplasma penetrans (strain HF-2) (Mycoplasma penetrans) protein is Large ribosomal subunit protein bL12.